We begin with the raw amino-acid sequence, 424 residues long: Glutamate-1-semialdehyde 2,1-aminomutase (424 aa).

Lysine 265 carries the post-translational modification N6-(pyridoxal phosphate)lysine.

The protein belongs to the class-III pyridoxal-phosphate-dependent aminotransferase family. HemL subfamily. As to quaternary structure, homodimer. Requires pyridoxal 5'-phosphate as cofactor.

The protein localises to the cytoplasm. The enzyme catalyses (S)-4-amino-5-oxopentanoate = 5-aminolevulinate. The protein operates within porphyrin-containing compound metabolism; protoporphyrin-IX biosynthesis; 5-aminolevulinate from L-glutamyl-tRNA(Glu): step 2/2. In Alkaliphilus oremlandii (strain OhILAs) (Clostridium oremlandii (strain OhILAs)), this protein is Glutamate-1-semialdehyde 2,1-aminomutase.